The primary structure comprises 480 residues: Glycogen synthase (480 aa).

ADP-alpha-D-glucose is bound at residue lysine 15.

Belongs to the glycosyltransferase 1 family. Bacterial/plant glycogen synthase subfamily.

The enzyme catalyses [(1-&gt;4)-alpha-D-glucosyl](n) + ADP-alpha-D-glucose = [(1-&gt;4)-alpha-D-glucosyl](n+1) + ADP + H(+). It functions in the pathway glycan biosynthesis; glycogen biosynthesis. Synthesizes alpha-1,4-glucan chains using ADP-glucose. This is Glycogen synthase from Granulibacter bethesdensis (strain ATCC BAA-1260 / CGDNIH1).